The primary structure comprises 219 residues: Probable transaldolase (219 aa).

Residue lysine 83 is the Schiff-base intermediate with substrate of the active site.

Belongs to the transaldolase family. Type 3B subfamily.

It localises to the cytoplasm. It catalyses the reaction D-sedoheptulose 7-phosphate + D-glyceraldehyde 3-phosphate = D-erythrose 4-phosphate + beta-D-fructose 6-phosphate. Its pathway is carbohydrate degradation; pentose phosphate pathway; D-glyceraldehyde 3-phosphate and beta-D-fructose 6-phosphate from D-ribose 5-phosphate and D-xylulose 5-phosphate (non-oxidative stage): step 2/3. Functionally, transaldolase is important for the balance of metabolites in the pentose-phosphate pathway. This Cereibacter sphaeroides (strain ATCC 17025 / ATH 2.4.3) (Rhodobacter sphaeroides) protein is Probable transaldolase.